A 344-amino-acid polypeptide reads, in one-letter code: Biotin synthase (344 aa).

The Radical SAM core domain maps to 40–267 (AQVQVSTLLS…KSMVRLSAGR (228 aa)). Cysteine 55, cysteine 59, and cysteine 62 together coordinate [4Fe-4S] cluster. Positions 99, 130, 190, and 262 each coordinate [2Fe-2S] cluster.

It belongs to the radical SAM superfamily. Biotin synthase family. As to quaternary structure, homodimer. [4Fe-4S] cluster serves as cofactor. The cofactor is [2Fe-2S] cluster.

The catalysed reaction is (4R,5S)-dethiobiotin + (sulfur carrier)-SH + 2 reduced [2Fe-2S]-[ferredoxin] + 2 S-adenosyl-L-methionine = (sulfur carrier)-H + biotin + 2 5'-deoxyadenosine + 2 L-methionine + 2 oxidized [2Fe-2S]-[ferredoxin]. Its pathway is cofactor biosynthesis; biotin biosynthesis; biotin from 7,8-diaminononanoate: step 2/2. Catalyzes the conversion of dethiobiotin (DTB) to biotin by the insertion of a sulfur atom into dethiobiotin via a radical-based mechanism. This is Biotin synthase from Xanthomonas axonopodis pv. citri (strain 306).